The chain runs to 244 residues: High frequency lysogenization protein HflD homolog (244 aa).

The protein belongs to the HflD family.

It is found in the cytoplasm. It localises to the cell inner membrane. The chain is High frequency lysogenization protein HflD homolog from Acinetobacter baumannii (strain ATCC 17978 / DSM 105126 / CIP 53.77 / LMG 1025 / NCDC KC755 / 5377).